A 382-amino-acid chain; its full sequence is Mannitol-1-phosphate 5-dehydrogenase (382 aa).

Residue 3–14 (ALHFGAGNIGRG) coordinates NAD(+).

It belongs to the mannitol dehydrogenase family.

It carries out the reaction D-mannitol 1-phosphate + NAD(+) = beta-D-fructose 6-phosphate + NADH + H(+). This is Mannitol-1-phosphate 5-dehydrogenase from Erwinia tasmaniensis (strain DSM 17950 / CFBP 7177 / CIP 109463 / NCPPB 4357 / Et1/99).